Reading from the N-terminus, the 256-residue chain is Ribosomal RNA small subunit methyltransferase J (256 aa).

S-adenosyl-L-methionine is bound by residues 104–105 (RD), 120–121 (ER), 156–157 (SS), and Asp-174.

The protein belongs to the methyltransferase superfamily. RsmJ family.

Its subcellular location is the cytoplasm. The catalysed reaction is guanosine(1516) in 16S rRNA + S-adenosyl-L-methionine = N(2)-methylguanosine(1516) in 16S rRNA + S-adenosyl-L-homocysteine + H(+). In terms of biological role, specifically methylates the guanosine in position 1516 of 16S rRNA. The polypeptide is Ribosomal RNA small subunit methyltransferase J (Yersinia pseudotuberculosis serotype O:3 (strain YPIII)).